Reading from the N-terminus, the 497-residue chain is Probable malate:quinone oxidoreductase (497 aa).

It belongs to the MQO family. FAD serves as cofactor.

The enzyme catalyses (S)-malate + a quinone = a quinol + oxaloacetate. It participates in carbohydrate metabolism; tricarboxylic acid cycle; oxaloacetate from (S)-malate (quinone route): step 1/1. In Prochlorococcus marinus (strain MIT 9515), this protein is Probable malate:quinone oxidoreductase.